We begin with the raw amino-acid sequence, 280 residues long: Phosphonoacetaldehyde hydrolase (280 aa).

The Nucleophile role is filled by Asp-23. Mg(2+) contacts are provided by Asp-23 and Ala-25. Lys-64 serves as the catalytic Schiff-base intermediate with substrate. Asp-197 serves as a coordination point for Mg(2+).

Belongs to the HAD-like hydrolase superfamily. PhnX family. In terms of assembly, homodimer. Mg(2+) serves as cofactor.

It carries out the reaction phosphonoacetaldehyde + H2O = acetaldehyde + phosphate + H(+). Functionally, involved in phosphonate degradation. The sequence is that of Phosphonoacetaldehyde hydrolase from Bordetella avium (strain 197N).